A 432-amino-acid polypeptide reads, in one-letter code: Glutamate-1-semialdehyde 2,1-aminomutase (432 aa).

K272 carries the N6-(pyridoxal phosphate)lysine modification.

Belongs to the class-III pyridoxal-phosphate-dependent aminotransferase family. HemL subfamily. In terms of assembly, homodimer. Pyridoxal 5'-phosphate serves as cofactor.

Its subcellular location is the cytoplasm. The catalysed reaction is (S)-4-amino-5-oxopentanoate = 5-aminolevulinate. It participates in porphyrin-containing compound metabolism; protoporphyrin-IX biosynthesis; 5-aminolevulinate from L-glutamyl-tRNA(Glu): step 2/2. It functions in the pathway porphyrin-containing compound metabolism; chlorophyll biosynthesis. The protein is Glutamate-1-semialdehyde 2,1-aminomutase of Trichodesmium erythraeum (strain IMS101).